A 248-amino-acid polypeptide reads, in one-letter code: Non-specific acid phosphatase (248 aa).

Residues Met-1–Ala-20 form the signal peptide.

It belongs to the class A bacterial acid phosphatase family.

It localises to the periplasm. The catalysed reaction is a phosphate monoester + H2O = an alcohol + phosphate. This is Non-specific acid phosphatase (phoN) from Providencia stuartii.